Here is a 372-residue protein sequence, read N- to C-terminus: Fatty acid 2-hydroxylase (372 aa).

One can recognise a Cytochrome b5 heme-binding domain in the interval 8–86 (AASFSPSEVQ…LEQYYVGELR (79 aa)). Positions 43 and 69 each coordinate heme. 2 helical membrane-spanning segments follow: residues 168–188 (VWYS…WSYY) and 213–233 (SMFP…EYLI). Residues 219 to 361 (FMLGTFLWSL…TKLWDYCFHT (143 aa)) form the Fatty acid hydroxylase domain. Positions 234, 239, 257, 260, and 261 each coordinate Zn(2+). Transmembrane regions (helical) follow at residues 268–288 (SRLV…YLCM) and 290–310 (LILP…GYVL). The Zn(2+) site is built by histidine 315, histidine 319, histidine 336, histidine 339, and histidine 340.

It belongs to the sterol desaturase family. SCS7 subfamily. Zn(2+) is required as a cofactor. As to expression, detected in differentiating cultured keratinocytes (at protein level). Detected in epidermis and cultured keratinocytes. Highly expressed in brain and colon. Detected at lower levels in testis, prostate, pancreas and kidney.

Its subcellular location is the endoplasmic reticulum membrane. It localises to the microsome membrane. It catalyses the reaction a 1,2-saturated fatty acid + 2 Fe(II)-[cytochrome b5] + O2 + 2 H(+) = a (R)-2-hydroxy fatty acid + 2 Fe(III)-[cytochrome b5] + H2O. The enzyme catalyses hexadecanoate + 2 Fe(II)-[cytochrome b5] + O2 + 2 H(+) = (R)-2-hydroxyhexadecanoate + 2 Fe(III)-[cytochrome b5] + H2O. It carries out the reaction octadecanoate + 2 Fe(II)-[cytochrome b5] + O2 + 2 H(+) = (R)-2-hydroxyoctadecanoate + 2 Fe(III)-[cytochrome b5] + H2O. The catalysed reaction is docosanoate + 2 Fe(II)-[cytochrome b5] + O2 + 2 H(+) = 2-hydroxydocosanoate + 2 Fe(III)-[cytochrome b5] + H2O. It catalyses the reaction tetracosanoate + 2 Fe(II)-[cytochrome b5] + O2 + 2 H(+) = (R)-2-hydroxytetracosanoate + 2 Fe(III)-[cytochrome b5] + H2O. It participates in lipid metabolism; fatty acid metabolism. The protein operates within sphingolipid metabolism; galactosylceramide biosynthesis. Its function is as follows. Catalyzes the hydroxylation of free fatty acids at the C-2 position to produce 2-hydroxy fatty acids, which are building blocks of sphingolipids and glycosphingolipids common in neural tissue and epidermis. FA2H is stereospecific for the production of (R)-2-hydroxy fatty acids. Plays an essential role in the synthesis of galactosphingolipids of the myelin sheath. Responsible for the synthesis of sphingolipids and glycosphingolipids involved in the formation of epidermal lamellar bodies critical for skin permeability barrier. Participates in the synthesis of glycosphingolipids and a fraction of type II wax diesters in sebaceous gland, specifically regulating hair follicle homeostasis. Involved in the synthesis of sphingolipids of plasma membrane rafts, controlling lipid raft mobility and trafficking of raft-associated proteins. This is Fatty acid 2-hydroxylase from Homo sapiens (Human).